A 1359-amino-acid chain; its full sequence is Nuclear protein STH1/NPS1 (1359 aa).

Ser-38 carries the phosphoserine modification. In terms of domain architecture, HSA spans 307–383 (LERQQLLEKR…AKQRLAALKS (77 aa)). One can recognise a Helicase ATP-binding domain in the interval 482 to 647 (VSLYNNHLNG…WALLNFVLPK (166 aa)). 495–502 (DEMGLGKT) serves as a coordination point for ATP. The DEGH box motif lies at 597–600 (DEGH). Residues 795–956 (LLDRVLPKFK…NKSTAEEQEA (162 aa)) form the Helicase C-terminal domain. The tract at residues 1090–1246 (RERRRLRQNG…TAAKKTKTKS (157 aa)) is disordered. Over residues 1108–1126 (LENTPEASETSLIENNSFT) the composition is skewed to polar residues. Basic residues-rich tracts occupy residues 1143 to 1154 (RSKRRSSRKKRT) and 1198 to 1210 (KKKK…KIKL). The segment covering 1219–1232 (NDGKRAEEKPESKS) has biased composition (basic and acidic residues). The span at 1233–1246 (PAKKTAAKKTKTKS) shows a compositional bias: basic residues. Positions 1257-1357 (KLVEEMREQL…EFTDEWFKEH (101 aa)) constitute a Bromo domain.

This sequence belongs to the SNF2/RAD54 helicase family. Interacts directly with SFH1, CSE4, histones H3, H4 and H2B, and via its N-terminus, with RSC8. Interacts with LDB7, NPL6 and RTT102. Component of the two forms of the RSC complex composed of at least either RSC1 or RSC2, and ARP7, ARP9, LDB7, NPL6, RSC3, RSC30, RSC4, RSC58, RSC6, RSC8, RSC9, SFH1, STH1, HTL1 and probably RTT102. The complexes interact with histone and histone variant components of centromeric chromatin.

Its subcellular location is the nucleus. The enzyme catalyses ATP + H2O = ADP + phosphate + H(+). Its function is as follows. Catalytic component of the chromatin structure-remodeling complex (RSC), which is involved in transcription regulation and nucleosome positioning. RSC is responsible for the transfer of a histone octamer from a nucleosome core particle to naked DNA. The reaction requires ATP and involves an activated RSC-nucleosome intermediate. Remodeling reaction also involves DNA translocation, DNA twist and conformational change. As a reconfigurer of centromeric and flanking nucleosomes, RSC complex is required both for proper kinetochore function in chromosome segregation and, via a PKC1-dependent signaling pathway, for organization of the cellular cytoskeleton. This subunit is the essential ATPase of the complex. It is a DNA translocase capable of nucleosome remodeling. Required for full expression of early meiotic genes. Essential for mitotic growth and repression of CHA1 expression. Also involved in G2 phase control. In Saccharomyces cerevisiae (strain ATCC 204508 / S288c) (Baker's yeast), this protein is Nuclear protein STH1/NPS1 (STH1).